Reading from the N-terminus, the 76-residue chain is ATP synthase subunit c (76 aa).

The next 2 helical transmembrane spans lie at 12-32 (LGSI…GIIF) and 54-74 (ILGF…PFVY).

The protein belongs to the ATPase C chain family. As to quaternary structure, F-type ATPases have 2 components, F(1) - the catalytic core - and F(0) - the membrane proton channel. F(1) has five subunits: alpha(3), beta(3), gamma(1), delta(1), epsilon(1). F(0) has three main subunits: a(1), b(2) and c(10-14). The alpha and beta chains form an alternating ring which encloses part of the gamma chain. F(1) is attached to F(0) by a central stalk formed by the gamma and epsilon chains, while a peripheral stalk is formed by the delta and b chains.

Its subcellular location is the cell membrane. In terms of biological role, f(1)F(0) ATP synthase produces ATP from ADP in the presence of a proton or sodium gradient. F-type ATPases consist of two structural domains, F(1) containing the extramembraneous catalytic core and F(0) containing the membrane proton channel, linked together by a central stalk and a peripheral stalk. During catalysis, ATP synthesis in the catalytic domain of F(1) is coupled via a rotary mechanism of the central stalk subunits to proton translocation. Its function is as follows. Key component of the F(0) channel; it plays a direct role in translocation across the membrane. A homomeric c-ring of between 10-14 subunits forms the central stalk rotor element with the F(1) delta and epsilon subunits. The chain is ATP synthase subunit c from Streptomyces coelicolor (strain ATCC BAA-471 / A3(2) / M145).